Here is a 380-residue protein sequence, read N- to C-terminus: Succinate--CoA ligase [ADP-forming] subunit beta 2 (380 aa).

An ATP-grasp domain is found at K9–I235. Residues K45, G52–G54, E91, I94, and E99 each bind ATP. Mg(2+) is bound by residues N191 and D204. Residues N255 and G312 to T314 contribute to the substrate site.

This sequence belongs to the succinate/malate CoA ligase beta subunit family. In terms of assembly, heterotetramer of two alpha and two beta subunits. It depends on Mg(2+) as a cofactor.

It catalyses the reaction succinate + ATP + CoA = succinyl-CoA + ADP + phosphate. The catalysed reaction is GTP + succinate + CoA = succinyl-CoA + GDP + phosphate. Its pathway is carbohydrate metabolism; tricarboxylic acid cycle; succinate from succinyl-CoA (ligase route): step 1/1. Succinyl-CoA synthetase functions in the citric acid cycle (TCA), coupling the hydrolysis of succinyl-CoA to the synthesis of either ATP or GTP and thus represents the only step of substrate-level phosphorylation in the TCA. The beta subunit provides nucleotide specificity of the enzyme and binds the substrate succinate, while the binding sites for coenzyme A and phosphate are found in the alpha subunit. This is Succinate--CoA ligase [ADP-forming] subunit beta 2 from Archaeoglobus fulgidus (strain ATCC 49558 / DSM 4304 / JCM 9628 / NBRC 100126 / VC-16).